The following is a 206-amino-acid chain: Ribonuclease HII (206 aa).

Positions A14 to P206 constitute an RNase H type-2 domain. Residues D20, E21, and D117 each contribute to the a divalent metal cation site.

This sequence belongs to the RNase HII family. Mn(2+) serves as cofactor. The cofactor is Mg(2+).

The protein resides in the cytoplasm. It catalyses the reaction Endonucleolytic cleavage to 5'-phosphomonoester.. In terms of biological role, endonuclease that specifically degrades the RNA of RNA-DNA hybrids. This is Ribonuclease HII from Pelodictyon phaeoclathratiforme (strain DSM 5477 / BU-1).